Here is a 321-residue protein sequence, read N- to C-terminus: Aspartate carbamoyltransferase catalytic subunit (321 aa).

Carbamoyl phosphate contacts are provided by arginine 65 and threonine 66. Lysine 93 is an L-aspartate binding site. Carbamoyl phosphate contacts are provided by arginine 115, histidine 143, and glutamine 146. The L-aspartate site is built by arginine 176 and arginine 230. Carbamoyl phosphate is bound by residues glycine 271 and proline 272.

Belongs to the aspartate/ornithine carbamoyltransferase superfamily. ATCase family. In terms of assembly, heterododecamer (2C3:3R2) of six catalytic PyrB chains organized as two trimers (C3), and six regulatory PyrI chains organized as three dimers (R2).

It catalyses the reaction carbamoyl phosphate + L-aspartate = N-carbamoyl-L-aspartate + phosphate + H(+). Its pathway is pyrimidine metabolism; UMP biosynthesis via de novo pathway; (S)-dihydroorotate from bicarbonate: step 2/3. Its function is as follows. Catalyzes the condensation of carbamoyl phosphate and aspartate to form carbamoyl aspartate and inorganic phosphate, the committed step in the de novo pyrimidine nucleotide biosynthesis pathway. In Bartonella tribocorum (strain CIP 105476 / IBS 506), this protein is Aspartate carbamoyltransferase catalytic subunit.